A 187-amino-acid chain; its full sequence is UPF0301 protein Shewmr7_1270 (187 aa).

Belongs to the UPF0301 (AlgH) family.

The protein is UPF0301 protein Shewmr7_1270 of Shewanella sp. (strain MR-7).